Here is a 128-residue protein sequence, read N- to C-terminus: Small ribosomal subunit protein uS9 (128 aa).

As to quaternary structure, part of the 30S ribosomal subunit. Contacts proteins S7 and S10.

In terms of biological role, part of the top of the head of the 30S subunit. The C-terminal region penetrates the head emerging in the P-site where it contacts tRNA. The sequence is that of Small ribosomal subunit protein uS9 (rpsI) from Thermus thermophilus (strain ATCC 27634 / DSM 579 / HB8).